Here is a 593-residue protein sequence, read N- to C-terminus: Insulin-like growth factor 2 mRNA-binding protein 3-B (593 aa).

RRM domains are found at residues asparagine 2 to proline 75 and arginine 81 to aspartate 156. A disordered region spans residues alanine 159–arginine 208. The span at proline 161–proline 176 shows a compositional bias: low complexity. 2 consecutive KH domains span residues glutamate 204–isoleucine 269 and glutamate 285–valine 352. A compositionally biased stretch (low complexity) spans serine 390 to proline 402. Residues serine 390 to glycine 412 are disordered. 2 consecutive KH domains span residues serine 417 to isoleucine 482 and lysine 499 to isoleucine 565. A disordered region spans residues glutamine 571–lysine 593.

Belongs to the RRM IMP/VICKZ family. Homodimer and multimer. Associates with microtubules. Interaction with a translocation machinery protein TRAPA of the endoplasmic reticulum. Component of a mRNP complex, at least composed of DAZAP1, IGF2BP3, STAU and VgRBP60. The mRNP complex with DAZAP1, IGF2BP3, STAU and VgRBP60 is only found in the cytoplasm. Interacts with a hnRNP 1 related RNA transport protein VgRBP60 both in the nucleus (in an RNA-independent manner) and the cytoplasm (in an RNA-dependent manner). Found in a B3 activator complex. As to expression, expressed in oocytes, kidney and pancreas (at protein level). Expressed in oocytes, kidney and pancreas.

Its subcellular location is the nucleus. The protein resides in the cytoplasm. The protein localises to the endoplasmic reticulum. RNA-binding protein that acts as a regulator of mRNA transport and localization. Binds to the RNA sequence motif 5'-UUCAC-3'. Preferentially binds to N6-methyladenosine (m6A)-containing mRNAs and increases their stability. Mediates the specific association of Vg1 RNA to microtubules. May regulate mRNA translation. Binds specifically to the vegetal localization elements (VLE or VgLE) in the 3'-UTR of Vg1 and VegT mRNAs. Binds to the Vg1 and VegT mRNAs in both the nucleus and the cytoplasm. May regulate mRNA translation. Acts as a transcription regulator. Binds to the 5'-[TA]GGTTACT-3' motif within element 3 of the TFIIIA gene promoter. The chain is Insulin-like growth factor 2 mRNA-binding protein 3-B (igf2bp3-b) from Xenopus laevis (African clawed frog).